The following is an 814-amino-acid chain: Plakophilin-2 (814 aa).

The interval Met-1–Leu-329 is required for binding to single-stranded DNA. Ser-44 bears the Phosphoserine mark. Omega-N-methylarginine is present on Arg-46. Ser-82 and Ser-130 each carry phosphoserine. ARM repeat units follow at residues Thr-200–Gly-240, Cys-309–Gln-352, Ser-354–Phe-393, Pro-503–Tyr-549, Pro-604–Ala-644, Ser-652–Arg-691, Gln-696–Gln-737, and Tyr-740–Ala-782.

The protein belongs to the beta-catenin family. Interacts with DSC2. Interacts with JUP. Interacts with KRT5/CK5, KRT8/CK8, KRT14/CK14, KRT18/CK18 and VIM. Interacts (via N-terminus) with MARK3/C-TAK1. Interacts with DSP. Interacts with DSG1, DSG2 and DSG3. Interacts (via N-terminus) with CTNNB1. Interacts with CDH1. Interacts with the RNA polymerase III (Pol III) complex proteins POLR3A/RPC155, POLR3F/RPC39 and POLR3C/RPC82. Interacts with CTNNA3. Interacts (via N-terminus) with SCN5A/Nav1.5. Interacts with ANK3/ANKG and GJA1/CX43. As to expression, expressed in the heart (at protein level).

It is found in the nucleus. It localises to the cell junction. The protein resides in the desmosome. Its subcellular location is the cytoplasm. A component of desmosome cell-cell junctions which are required for positive regulation of cellular adhesion. Regulates focal adhesion turnover resulting in changes in focal adhesion size, cell adhesion and cell spreading, potentially via transcriptional modulation of beta-integrins. Required to maintain gingival epithelial barrier function. Important component of the desmosome that is also required for localization of desmosome component proteins such as DSC2, DSG2 and JUP to the desmosome cell-cell junction. Required for the formation of desmosome cell junctions in cardiomyocytes, thereby required for the correct formation of the heart, specifically trabeculation and formation of the atria walls. Loss of desmosome cell junctions leads to mis-localization of DSP and DSG2 resulting in disruption of cell-cell adhesion and disordered intermediate filaments. Modulates profibrotic gene expression in cardiomyocytes via regulation of DSP expression and subsequent activation of downstream TGFB1 and MAPK14/p38 MAPK signaling. Required for cardiac sodium current propagation and electrical synchrony in cardiac myocytes, via ANK3 stabilization and modulation of SCN5A/Nav1.5 localization to cell-cell junctions. Required for mitochondrial function, nuclear envelope integrity and positive regulation of SIRT3 transcription via maintaining DES localization at its nuclear envelope and cell tip anchoring points, and thereby preserving regulation of the transcriptional program. Maintenance of nuclear envelope integrity protects against DNA damage and transcriptional dysregulation of genes, especially those involved in the electron transport chain, thereby preserving mitochondrial function and protecting against superoxide radical anion generation. Binds single-stranded DNA (ssDNA). May regulate the localization of GJA1 to gap junctions in intercalated disks of the heart. This Rattus norvegicus (Rat) protein is Plakophilin-2.